A 579-amino-acid polypeptide reads, in one-letter code: Transcription factor MTB2 (579 aa).

The interval 373–439 (GGMQIDFTNS…PLNHVEAERQ (67 aa)) is disordered. Residues 382–392 (SRPVVSPVPTV) are compositionally biased toward low complexity. Basic and acidic residues-rich tracts occupy residues 393 to 415 (ESEH…DERR) and 425 to 439 (NGRE…AERQ). Residues 428 to 441 (EEPLNHVEAERQRR) are basic motif; degenerate. The 50-residue stretch at 428–477 (EEPLNHVEAERQRREKLNQRFYALRAVVPNISKMDKASLLGDAIAHITDM) folds into the bHLH domain. Residues 442-477 (EKLNQRFYALRAVVPNISKMDKASLLGDAIAHITDM) are helix-loop-helix motif.

Its subcellular location is the nucleus. Transcription factor that negatively regulates jasmonate (JA) signaling. Negatively regulates JA-dependent response to wounding, JA-induced expression of defense genes, JA-dependent responses against herbivorous insects, and JA-dependent resistance against Botrytis cinerea infection. Plays a positive role in resistance against the bacterial pathogen Pseudomonas syringae pv tomato DC3000. This chain is Transcription factor MTB2, found in Solanum lycopersicum (Tomato).